The following is a 234-amino-acid chain: 2-amino-5-formylamino-6-ribosylaminopyrimidin-4(3H)-one 5'-monophosphate deformylase (234 aa).

E30, H32, D41, and H111 together coordinate Fe cation.

This sequence belongs to the creatininase superfamily. FAPy deformylase family. As to quaternary structure, homodimer. Requires Fe(2+) as cofactor. The cofactor is Zn(2+).

The catalysed reaction is 2-amino-5-formylamino-6-(5-phospho-D-ribosylamino)pyrimidin-4(3H)-one + H2O = 2,5-diamino-6-(1-D-ribosylamino)pyrimidin-4(3H)-one 5'-phosphate + formate + H(+). It functions in the pathway cofactor biosynthesis; coenzyme F420 biosynthesis. Its pathway is cofactor biosynthesis; riboflavin biosynthesis. Catalyzes the hydrolysis of the formamide of 2-amino-5-formylamino-6-ribosylamino-4(3H)-pyrimidinone 5'-monophosphate (FAPy) to form 2,5-diamino-6-ribosylamino-4(3H)-pyrimidinone 5'-phosphate (APy). The protein is 2-amino-5-formylamino-6-ribosylaminopyrimidin-4(3H)-one 5'-monophosphate deformylase of Methanothermobacter thermautotrophicus (strain ATCC 29096 / DSM 1053 / JCM 10044 / NBRC 100330 / Delta H) (Methanobacterium thermoautotrophicum).